Consider the following 727-residue polypeptide: Catalase-peroxidase (727 aa).

The tract at residues 1–26 (MSDEKKCPVTGRTSSQVAGSGTSNKD) is disordered. Polar residues predominate over residues 11–26 (GRTSSQVAGSGTSNKD). The segment at residues 96 to 219 (WHSAGTYRIG…LAAVQMGLIY (124 aa)) is a cross-link (tryptophyl-tyrosyl-methioninium (Trp-Tyr) (with M-245)). Catalysis depends on His-97, which acts as the Proton acceptor. Positions 219-245 (YVNPEGPNGDPNAVASGKDVRETFARM) form a cross-link, tryptophyl-tyrosyl-methioninium (Tyr-Met) (with W-96). A heme b-binding site is contributed by His-260. Basic and acidic residues predominate over residues 346–362 (SDPEAKKAVPDAHDPSK). Residues 346 to 365 (SDPEAKKAVPDAHDPSKTHP) are disordered.

It belongs to the peroxidase family. Peroxidase/catalase subfamily. As to quaternary structure, homodimer or homotetramer. Heme b is required as a cofactor. Post-translationally, formation of the three residue Trp-Tyr-Met cross-link is important for the catalase, but not the peroxidase activity of the enzyme.

The enzyme catalyses H2O2 + AH2 = A + 2 H2O. It catalyses the reaction 2 H2O2 = O2 + 2 H2O. Functionally, bifunctional enzyme with both catalase and broad-spectrum peroxidase activity. The protein is Catalase-peroxidase of Maridesulfovibrio salexigens (strain ATCC 14822 / DSM 2638 / NCIMB 8403 / VKM B-1763) (Desulfovibrio salexigens).